The primary structure comprises 774 residues: Mastermind-like domain-containing protein 1 (774 aa).

Disordered stretches follow at residues 257–279, 310–365, 386–421, 442–473, 525–609, 656–678, and 755–774; these read STGI…SSMA, LAAS…PQSL, ALLS…QPQF, HLMS…QQSF, GMAS…QPDH, PQHQ…VSPS, and LPSC…GNDP. Residues 331 to 361 are compositionally biased toward pro residues; the sequence is LPPPGLSPPYRPVPSPHPPPLPLPPPPPPFS. A compositionally biased stretch (polar residues) spans 386 to 397; sequence ALLSSMTSSSNA. The span at 574-609 shows a compositional bias: low complexity; it reads QQPTPTQASSATASSTATATLQLQQQQQQQQQQPDH. The segment covering 656–669 has biased composition (polar residues); that stretch reads PQHQHGNSFTSRQD. S676 carries the phosphoserine modification.

The protein belongs to the mastermind family. As to expression, expressed in fetal brain, fetal ovary and fetal testis. Expressed in adult brain, ovary, skin, testis, uterus. Highly expressed in skeletal muscle.

It is found in the nucleus. Transactivates the HES3 promoter independently of NOTCH proteins. HES3 is a non-canonical NOTCH target gene which lacks binding sites for RBPJ. This chain is Mastermind-like domain-containing protein 1 (MAMLD1), found in Homo sapiens (Human).